The primary structure comprises 139 residues: Peptide methionine sulfoxide reductase MsrB (139 aa).

Residues 9-131 (TPSDNTEMTE…NSASLSFIDD (123 aa)) enclose the MsrB domain. Residues cysteine 48, cysteine 51, cysteine 97, and cysteine 100 each coordinate Zn(2+). Cysteine 120 functions as the Nucleophile in the catalytic mechanism.

The protein belongs to the MsrB Met sulfoxide reductase family. It depends on Zn(2+) as a cofactor.

It carries out the reaction L-methionyl-[protein] + [thioredoxin]-disulfide + H2O = L-methionyl-(R)-S-oxide-[protein] + [thioredoxin]-dithiol. This chain is Peptide methionine sulfoxide reductase MsrB, found in Pectobacterium atrosepticum (strain SCRI 1043 / ATCC BAA-672) (Erwinia carotovora subsp. atroseptica).